Reading from the N-terminus, the 295-residue chain is Pyridoxal 5'-phosphate synthase subunit PdxS (295 aa).

A D-ribose 5-phosphate-binding site is contributed by aspartate 25. Lysine 82 functions as the Schiff-base intermediate with D-ribose 5-phosphate in the catalytic mechanism. Residue glycine 154 participates in D-ribose 5-phosphate binding. Arginine 166 lines the D-glyceraldehyde 3-phosphate pocket. D-ribose 5-phosphate contacts are provided by residues glycine 215 and 236–237; that span reads GS.

The protein belongs to the PdxS/SNZ family. In the presence of PdxT, forms a dodecamer of heterodimers.

It carries out the reaction aldehydo-D-ribose 5-phosphate + D-glyceraldehyde 3-phosphate + L-glutamine = pyridoxal 5'-phosphate + L-glutamate + phosphate + 3 H2O + H(+). Its pathway is cofactor biosynthesis; pyridoxal 5'-phosphate biosynthesis. Catalyzes the formation of pyridoxal 5'-phosphate from ribose 5-phosphate (RBP), glyceraldehyde 3-phosphate (G3P) and ammonia. The ammonia is provided by the PdxT subunit. Can also use ribulose 5-phosphate and dihydroxyacetone phosphate as substrates, resulting from enzyme-catalyzed isomerization of RBP and G3P, respectively. In Bacillus cytotoxicus (strain DSM 22905 / CIP 110041 / 391-98 / NVH 391-98), this protein is Pyridoxal 5'-phosphate synthase subunit PdxS.